We begin with the raw amino-acid sequence, 1298 residues long: Phosphoribosylformylglycinamidine synthase (1298 aa).

A disordered region spans residues 301 to 328; it reads APFPGASTGSGGEIRDEGATGRGAKPKA. Residues 305–316, 384–386, and Ala-676 contribute to the ATP site; these read GASTGSGGEIRD and TGY. Mg(2+)-binding residues include Asp-677, Glu-716, Asn-720, and Asp-884. Ser-886 is an ATP binding site. The Glutamine amidotransferase type-1 domain maps to 1045–1298; the sequence is VAVLREQGVN…MFRNARVWVN (254 aa). Cys-1138 (nucleophile) is an active-site residue. Catalysis depends on residues His-1263 and Glu-1265.

The protein in the N-terminal section; belongs to the FGAMS family. In terms of assembly, monomer.

It localises to the cytoplasm. It catalyses the reaction N(2)-formyl-N(1)-(5-phospho-beta-D-ribosyl)glycinamide + L-glutamine + ATP + H2O = 2-formamido-N(1)-(5-O-phospho-beta-D-ribosyl)acetamidine + L-glutamate + ADP + phosphate + H(+). The protein operates within purine metabolism; IMP biosynthesis via de novo pathway; 5-amino-1-(5-phospho-D-ribosyl)imidazole from N(2)-formyl-N(1)-(5-phospho-D-ribosyl)glycinamide: step 1/2. Its function is as follows. Phosphoribosylformylglycinamidine synthase involved in the purines biosynthetic pathway. Catalyzes the ATP-dependent conversion of formylglycinamide ribonucleotide (FGAR) and glutamine to yield formylglycinamidine ribonucleotide (FGAM) and glutamate. The sequence is that of Phosphoribosylformylglycinamidine synthase from Pseudomonas fluorescens (strain Pf0-1).